Here is a 200-residue protein sequence, read N- to C-terminus: Inner membrane-spanning protein YciB (200 aa).

6 consecutive transmembrane segments (helical) span residues 7-27 (HPLFKLATELGPLIVFFVVNA), 32-52 (FAATGAFMVAIVAAMIASYVV), 56-76 (VPLMAIVTGIVVLVFGTLTLV), 93-113 (LFAAVLGGGLLFNRSFIAIMF), 126-146 (ILTFRWALFFAAMAVLNEIIW), and 153-173 (FWVGFKAFGVVPLTMIFAIAQ).

Belongs to the YciB family.

The protein resides in the cell inner membrane. Functionally, plays a role in cell envelope biogenesis, maintenance of cell envelope integrity and membrane homeostasis. The chain is Inner membrane-spanning protein YciB from Bradyrhizobium sp. (strain BTAi1 / ATCC BAA-1182).